Here is a 212-residue protein sequence, read N- to C-terminus: Ribosomal RNA small subunit methyltransferase G (212 aa).

Residues G80, L85, 131-132 (AE), and R146 contribute to the S-adenosyl-L-methionine site.

Belongs to the methyltransferase superfamily. RNA methyltransferase RsmG family.

Its subcellular location is the cytoplasm. It carries out the reaction guanosine(527) in 16S rRNA + S-adenosyl-L-methionine = N(7)-methylguanosine(527) in 16S rRNA + S-adenosyl-L-homocysteine. Its function is as follows. Specifically methylates the N7 position of guanine in position 527 of 16S rRNA. The chain is Ribosomal RNA small subunit methyltransferase G from Xanthomonas campestris pv. campestris (strain B100).